Consider the following 339-residue polypeptide: DNA-directed RNA polymerase subunit alpha (339 aa).

Residues Met1–Glu233 are alpha N-terminal domain (alpha-NTD). Residues Lys264 to Phe339 are alpha C-terminal domain (alpha-CTD).

It belongs to the RNA polymerase alpha chain family. In terms of assembly, in plastids the minimal PEP RNA polymerase catalytic core is composed of four subunits: alpha, beta, beta', and beta''. When a (nuclear-encoded) sigma factor is associated with the core the holoenzyme is formed, which can initiate transcription.

It localises to the plastid. Its subcellular location is the chloroplast. The catalysed reaction is RNA(n) + a ribonucleoside 5'-triphosphate = RNA(n+1) + diphosphate. DNA-dependent RNA polymerase catalyzes the transcription of DNA into RNA using the four ribonucleoside triphosphates as substrates. The polypeptide is DNA-directed RNA polymerase subunit alpha (Psathyrostachys stoloniformis).